A 161-amino-acid chain; its full sequence is Globin CTT-IX (161 aa).

The signal sequence occupies residues 1–16 (MKFFIVLALCIVGAIA). Residues 18-161 (PVSSDQANAI…NIFGMIFAHL (144 aa)) form the Globin domain. Heme b is bound by residues histidine 76 and histidine 111.

The protein belongs to the globin family. In terms of assembly, homodimer.

The chain is Globin CTT-IX (CTT-9) from Chironomus thummi thummi (Midge).